A 497-amino-acid polypeptide reads, in one-letter code: Cytochrome P450 71A14 (497 aa).

Residues 3 to 23 (MIIISLCLATILALLLLKQFL) traverse the membrane as a helical segment. Cys-440 provides a ligand contact to heme.

This sequence belongs to the cytochrome P450 family. Heme serves as cofactor.

It is found in the membrane. The chain is Cytochrome P450 71A14 (CYP71A14) from Arabidopsis thaliana (Mouse-ear cress).